The sequence spans 367 residues: Anhydro-N-acetylmuramic acid kinase (367 aa).

13–20 (GTSMDGAD) is an ATP binding site.

Belongs to the anhydro-N-acetylmuramic acid kinase family.

It catalyses the reaction 1,6-anhydro-N-acetyl-beta-muramate + ATP + H2O = N-acetyl-D-muramate 6-phosphate + ADP + H(+). It functions in the pathway amino-sugar metabolism; 1,6-anhydro-N-acetylmuramate degradation. Its pathway is cell wall biogenesis; peptidoglycan recycling. In terms of biological role, catalyzes the specific phosphorylation of 1,6-anhydro-N-acetylmuramic acid (anhMurNAc) with the simultaneous cleavage of the 1,6-anhydro ring, generating MurNAc-6-P. Is required for the utilization of anhMurNAc either imported from the medium or derived from its own cell wall murein, and thus plays a role in cell wall recycling. This Neisseria meningitidis serogroup A / serotype 4A (strain DSM 15465 / Z2491) protein is Anhydro-N-acetylmuramic acid kinase.